The chain runs to 145 residues: uncharacterized protein (145 aa).

Belongs to the methyltransferase superfamily.

Probable methyltransferase. This is an uncharacterized protein from Schizosaccharomyces pombe (strain 972 / ATCC 24843) (Fission yeast).